We begin with the raw amino-acid sequence, 63 residues long: Cecropin-B (63 aa).

An N-terminal signal peptide occupies residues 1 to 22 (MNFAKILSFVFALVLALSMTSA). A propeptide spans 23 to 26 (APEP) (removed by a dipeptidylpeptidase). Lysine 47 carries the post-translational modification 5-hydroxylysine; partial. Isoleucine 61 is modified (isoleucine amide).

Belongs to the cecropin family. In terms of processing, lepidopteran-B differs from lepidopteran-A by its hydroxylated residue. As to expression, highest expression in fat body and hemocytes. Is also expressed in Malpighian tubules and to a much lesser extent in midgut. Not present in silk gland.

Its subcellular location is the secreted. Cecropins have lytic and antibacterial activity against several Gram-positive and Gram-negative bacteria. The polypeptide is Cecropin-B (CECB1) (Bombyx mori (Silk moth)).